A 94-amino-acid chain; its full sequence is Small ubiquitin-related modifier 3 (94 aa).

Lysine 11 is covalently cross-linked (Glycyl lysine isopeptide (Lys-Gly) (interchain with G-Cter in SUMO)). The 78-residue stretch at 15–92 (DHINLKVAGQ…IDVFQQQTGG (78 aa)) folds into the Ubiquitin-like domain. Residue glycine 92 forms a Glycyl lysine isopeptide (Gly-Lys) (interchain with K-? in acceptor proteins) linkage. Residues 93 to 94 (VC) constitute a propeptide that is removed on maturation.

This sequence belongs to the ubiquitin family. SUMO subfamily. In terms of assembly, interacts with sae2 and ube2i. Covalently attached to a number of proteins. In terms of processing, polymeric chains can be formed through Lys-11 cross-linking. Cleavage of precursor form by a sentrin-specific protease is necessary for function.

It is found in the cytoplasm. Its subcellular location is the nucleus. The protein localises to the PML body. Functionally, ubiquitin-like protein which can be covalently attached to target lysines either as a monomer or as a lysine-linked polymer. Does not seem to be involved in protein degradation and may function as an antagonist of ubiquitin in the degradation process. Plays a role in a number of cellular processes such as nuclear transport, DNA replication and repair, mitosis and signal transduction. Covalent attachment to its substrates requires prior activation by the E1 complex sae1-sae2 and linkage to the E2 enzyme ube2i. The protein is Small ubiquitin-related modifier 3 (sumo3) of Xenopus laevis (African clawed frog).